A 345-amino-acid polypeptide reads, in one-letter code: Phosphoribosylformylglycinamidine cyclo-ligase (345 aa).

This sequence belongs to the AIR synthase family.

It is found in the cytoplasm. The catalysed reaction is 2-formamido-N(1)-(5-O-phospho-beta-D-ribosyl)acetamidine + ATP = 5-amino-1-(5-phospho-beta-D-ribosyl)imidazole + ADP + phosphate + H(+). The protein operates within purine metabolism; IMP biosynthesis via de novo pathway; 5-amino-1-(5-phospho-D-ribosyl)imidazole from N(2)-formyl-N(1)-(5-phospho-D-ribosyl)glycinamide: step 2/2. This chain is Phosphoribosylformylglycinamidine cyclo-ligase, found in Ligilactobacillus salivarius (strain UCC118) (Lactobacillus salivarius).